A 1217-amino-acid polypeptide reads, in one-letter code: MLSVEMISRQNRCHYVYKGGNMMRRILHIVLITALMFLNVMYTFEAVKAAEPQQPISIEKAIQQKEGQALVEGYAVGQAVSPQHYKLTSPFSNDYNVALADRKNKTSPEHILPVQIPSAFRSQFGLQTNPLLLGKKITVQGKLENYFNTTGLKNVQSMNVTDDTKTPPAEQQVTINEARGRLNEEVTIKGIITADQNAIGGGKLSTFLQDETGGINIYSPSPEQFPELKEGMDVTVTGKITSYQGLKEIVPNSSGIKINQSNQSLPAPKHLTINELINGSLGDQYEGRLVKLTAFVSSIPSSPAGGGYNVTMIDDDHHAMTLRVMNETGVINELDEGKWYEFTGVLSRYQTFQLLPRKSADLKLLEEQPAPPSAEGEYEGIVDRVVDGDTIHLKSPVLGTTKIRFVNVDAPETYHTPKNDADENQLRFGKKASDYLKTVLSPGDKITVKVGSEAKDSYGRLLGQVITESGSNVNLELVKNGYAPTYFIWPVDNEEDYQQFQAAVAAAKKDQKGIWNENDPLMEMPFEFRAREQGKGLTRYVGDSSNKTYVQPADWKKIAVENRIFFASASEAESAGYKKRQTAPQEHVPLRILSMNDLHGKIDQQYELDLDGNGTVDGTFGRMDYAAAYLKEKKAEKKNSLIVHAGDMIGGSSPVSSLLQDEPTVELMEDIGFDVGTVGNHEFDEGTDELLRILNGGDHPKGTSGYDGQNFPLVCANCKMKSTGEPFLPAYDIINVEGVPVAFIGVVTQSAAGMVMPEGIKNIEFTDEATAVNKAAEELKKKGVKAIAVLAHMSAEQNGNAITGESADLANKTDSEIDVIFAAHNHQVVNGEVNGKLIVQAFEYGKAIGVVDVEIDKTTKDIVKKSAEIVYVDQSKIEPDVSASAILKKYETIAEPIISEVVGEAAVDMEGGYSNDGDTPLGNLIADGMRAAMKTDFALMNGGGIREALKKGPITWGDLYNIQPFGNVLTKLEIKGKDLREIINAQISPVFGPDYSISGFTYTWDKETGKAVDMKMADGTEIQPDATYTLTVNNFMATATGAKYQPIGLLGKNPVTGPEDLEATVEYVKSFDEPIAYTKEGRIKLAEASDIEDPVTEDPITEEPGDDPGTEDPIKEDPRPGEDLPDIKETPGTAPVHQLPPSAISRFNEIPINNTKTADTANSISTLPLQTETAESGSDHQLPDTSAGYYNFMVIGAAVTLSGTYLYVRRKRSASRT.

The signal sequence occupies residues 1 to 46; that stretch reads MLSVEMISRQNRCHYVYKGGNMMRRILHIVLITALMFLNVMYTFEA. A TNase-like domain is found at 376 to 517; sequence GEYEGIVDRV…KKDQKGIWNE (142 aa). Catalysis depends on residues arginine 404, glutamate 412, and arginine 460. The tract at residues 590-828 is phosphoesterase; the sequence is LRILSMNDLH…VIFAAHNHQV (239 aa). Aspartate 597, histidine 599, aspartate 647, asparagine 680, histidine 792, and histidine 824 together coordinate a divalent metal cation. The segment at 829–1085 is 5'-nucleotidase; the sequence is VNGEVNGKLI…AYTKEGRIKL (257 aa). Residues phenylalanine 965 and 1035–1042 contribute to the substrate site; that span reads FMATATGA. Residues 1087-1142 form a disordered region; it reads EASDIEDPVTEDPITEEPGDDPGTEDPIKEDPRPGEDLPDIKETPGTAPVHQLPPS. A compositionally biased stretch (acidic residues) spans 1089-1110; sequence SDIEDPVTEDPITEEPGDDPGT. Positions 1112 to 1129 are enriched in basic and acidic residues; it reads DPIKEDPRPGEDLPDIKE. Positions 1182–1186 match the LPXTG sorting signal motif; sequence LPDTS. Threonine 1185 is modified (pentaglycyl murein peptidoglycan amidated threonine). A propeptide spans 1186–1217 (removed by sortase); the sequence is SAGYYNFMVIGAAVTLSGTYLYVRRKRSASRT.

In the C-terminal section; belongs to the 5'-nucleotidase family. It depends on Ca(2+) as a cofactor. Mn(2+) is required as a cofactor.

The protein resides in the secreted. It localises to the cell wall. With respect to regulation, requires a minimum of 0.1 mM of calcium for a significant activity. Maximal activity was observed with concentrations of calcium between 1 to 5 mM. Is 10-fold less active with the corresponding concentrations of manganese. Inhibited by NaCl at concentrations of 100 mM and higher. Sugar-nonspecific endonuclease that yields nucleotide 3'-monophosphate products. No 5'-nucleotidase activity was detected, using 5'-AMP as the substrate, in the presence of diverse divalent metals and with various pH values. In Bacillus subtilis (strain 168), this protein is Endonuclease YhcR (yhcR).